A 141-amino-acid polypeptide reads, in one-letter code: Translation initiation factor 2 subunit beta (141 aa).

This sequence belongs to the eIF-2-beta/eIF-5 family. Heterotrimer composed of an alpha, a beta and a gamma chain.

In terms of biological role, eIF-2 functions in the early steps of protein synthesis by forming a ternary complex with GTP and initiator tRNA. In Sulfolobus acidocaldarius (strain ATCC 33909 / DSM 639 / JCM 8929 / NBRC 15157 / NCIMB 11770), this protein is Translation initiation factor 2 subunit beta.